The following is a 403-amino-acid chain: MGLRNLLDKVEHHFEKGGRYEKWYPLYEAVDTFLYRPGSVTRTTAHVRDGIDLKRMMIIVWLCTFPAMFFGMYNVGHQANLIFAQSPDLLGAQDGWRFALIGALAGFDPNSLWDCLVQGAAYFLPVYLTTFIVGGFWEVLFATIRRHEVNEGFFVTSVLFALTLPPSVPLWQVALGISFGVVLGKEVFGGTGKNFLNPALVGRAFLFFAYPAQMSGDAVWTSVDGFAGATSLSLAAAGGVDNILGHGLTWMDAFLGHMQGSMGETSTLAIFIGGAVLLLTRIASWRIVAGVMLGMIAMSYLFNAIGSTSNPMFAMPWYWHLVTGGFAFGMIFMATDPVSASMTDTGKWLFGALIGVMVMLIRVVNPAFPEGMMLAILFANLFAPLIDHFVVQANIKRRLARNG.

Transmembrane regions (helical) follow at residues 56–76 (MMIIVWLCTFPAMFFGMYNVG), 121–141 (AYFLPVYLTTFIVGGFWEVLF), 164–184 (LPPSVPLWQVALGISFGVVLG), 225–245 (GFAGATSLSLAAAGGVDNILG), 260–280 (GSMGETSTLAIFIGGAVLLLT), 287–307 (IVAGVMLGMIAMSYLFNAIGS), 312–332 (MFAMPWYWHLVTGGFAFGMIF), 348–368 (WLFGALIGVMVMLIRVVNPAF), and 371–391 (GMMLAILFANLFAPLIDHFVV). At Thr230 the chain carries FMN phosphoryl threonine.

The protein belongs to the NqrB/RnfD family. In terms of assembly, composed of six subunits; NqrA, NqrB, NqrC, NqrD, NqrE and NqrF. Requires FMN as cofactor.

The protein localises to the cell inner membrane. The catalysed reaction is a ubiquinone + n Na(+)(in) + NADH + H(+) = a ubiquinol + n Na(+)(out) + NAD(+). Functionally, NQR complex catalyzes the reduction of ubiquinone-1 to ubiquinol by two successive reactions, coupled with the transport of Na(+) ions from the cytoplasm to the periplasm. NqrA to NqrE are probably involved in the second step, the conversion of ubisemiquinone to ubiquinol. The chain is Na(+)-translocating NADH-quinone reductase subunit B from Pseudomonas paraeruginosa (strain DSM 24068 / PA7) (Pseudomonas aeruginosa (strain PA7)).